Consider the following 239-residue polypeptide: Ribonuclease PH (239 aa).

Residues Arg87 and 125-127 contribute to the phosphate site; that span reads GTR.

It belongs to the RNase PH family. Homohexameric ring arranged as a trimer of dimers.

It catalyses the reaction tRNA(n+1) + phosphate = tRNA(n) + a ribonucleoside 5'-diphosphate. Phosphorolytic 3'-5' exoribonuclease that plays an important role in tRNA 3'-end maturation. Removes nucleotide residues following the 3'-CCA terminus of tRNAs; can also add nucleotides to the ends of RNA molecules by using nucleoside diphosphates as substrates, but this may not be physiologically important. Probably plays a role in initiation of 16S rRNA degradation (leading to ribosome degradation) during starvation. The sequence is that of Ribonuclease PH from Azotobacter vinelandii (strain DJ / ATCC BAA-1303).